Reading from the N-terminus, the 122-residue chain is S-adenosylmethionine decarboxylase proenzyme (122 aa).

Ser-63 acts as the Schiff-base intermediate with substrate; via pyruvic acid in catalysis. Ser-63 bears the Pyruvic acid (Ser); by autocatalysis mark. His-68 functions as the Proton acceptor; for processing activity in the catalytic mechanism. Cys-83 (proton donor; for catalytic activity) is an active-site residue.

It belongs to the prokaryotic AdoMetDC family. Type 1 subfamily. In terms of assembly, heterotetramer of two alpha and two beta chains arranged as a dimer of alpha/beta heterodimers. Pyruvate serves as cofactor. In terms of processing, is synthesized initially as an inactive proenzyme. Formation of the active enzyme involves a self-maturation process in which the active site pyruvoyl group is generated from an internal serine residue via an autocatalytic post-translational modification. Two non-identical subunits are generated from the proenzyme in this reaction, and the pyruvate is formed at the N-terminus of the alpha chain, which is derived from the carboxyl end of the proenzyme. The post-translation cleavage follows an unusual pathway, termed non-hydrolytic serinolysis, in which the side chain hydroxyl group of the serine supplies its oxygen atom to form the C-terminus of the beta chain, while the remainder of the serine residue undergoes an oxidative deamination to produce ammonia and the pyruvoyl group blocking the N-terminus of the alpha chain.

It carries out the reaction S-adenosyl-L-methionine + H(+) = S-adenosyl 3-(methylsulfanyl)propylamine + CO2. It functions in the pathway amine and polyamine biosynthesis; S-adenosylmethioninamine biosynthesis; S-adenosylmethioninamine from S-adenosyl-L-methionine: step 1/1. Catalyzes the decarboxylation of S-adenosylmethionine to S-adenosylmethioninamine (dcAdoMet), the propylamine donor required for the synthesis of the polyamines spermine and spermidine from the diamine putrescine. In Methanococcus maripaludis (strain C5 / ATCC BAA-1333), this protein is S-adenosylmethionine decarboxylase proenzyme.